The sequence spans 64 residues: Protein DsrB (64 aa).

It belongs to the DsrB family.

The chain is Protein DsrB from Salmonella enteritidis PT4 (strain P125109).